The chain runs to 142 residues: Large ribosomal subunit protein uL13 (142 aa).

The protein belongs to the universal ribosomal protein uL13 family. In terms of assembly, part of the 50S ribosomal subunit.

This protein is one of the early assembly proteins of the 50S ribosomal subunit, although it is not seen to bind rRNA by itself. It is important during the early stages of 50S assembly. This chain is Large ribosomal subunit protein uL13, found in Pectobacterium carotovorum subsp. carotovorum (strain PC1).